A 232-amino-acid polypeptide reads, in one-letter code: 5'-methylthioadenosine/S-adenosylhomocysteine nucleosidase (232 aa).

Residue glutamate 14 is the Proton acceptor of the active site. Substrate-binding positions include glycine 80, valine 154, and methionine 175–glutamate 176. Aspartate 199 (proton donor) is an active-site residue.

This sequence belongs to the PNP/UDP phosphorylase family. MtnN subfamily.

The enzyme catalyses S-adenosyl-L-homocysteine + H2O = S-(5-deoxy-D-ribos-5-yl)-L-homocysteine + adenine. The catalysed reaction is S-methyl-5'-thioadenosine + H2O = 5-(methylsulfanyl)-D-ribose + adenine. It catalyses the reaction 5'-deoxyadenosine + H2O = 5-deoxy-D-ribose + adenine. It participates in amino-acid biosynthesis; L-methionine biosynthesis via salvage pathway; S-methyl-5-thio-alpha-D-ribose 1-phosphate from S-methyl-5'-thioadenosine (hydrolase route): step 1/2. Catalyzes the irreversible cleavage of the glycosidic bond in both 5'-methylthioadenosine (MTA) and S-adenosylhomocysteine (SAH/AdoHcy) to adenine and the corresponding thioribose, 5'-methylthioribose and S-ribosylhomocysteine, respectively. Also cleaves 5'-deoxyadenosine, a toxic by-product of radical S-adenosylmethionine (SAM) enzymes, into 5-deoxyribose and adenine. This is 5'-methylthioadenosine/S-adenosylhomocysteine nucleosidase from Haemophilus ducreyi (strain 35000HP / ATCC 700724).